The sequence spans 753 residues: 5-methyltetrahydropteroyltriglutamate--homocysteine methyltransferase (753 aa).

5-methyltetrahydropteroyltri-L-glutamate is bound by residues 17-20 (RELK) and Lys-117. L-homocysteine-binding positions include 431–433 (IGS) and Glu-484. L-methionine-binding positions include 431-433 (IGS) and Glu-484. Residues 515-516 (RC) and Trp-561 each bind 5-methyltetrahydropteroyltri-L-glutamate. Asp-599 is an L-homocysteine binding site. Asp-599 contributes to the L-methionine binding site. Glu-605 is a 5-methyltetrahydropteroyltri-L-glutamate binding site. Positions 641, 643, and 665 each coordinate Zn(2+). Catalysis depends on His-694, which acts as the Proton donor. Cys-726 is a binding site for Zn(2+).

The protein belongs to the vitamin-B12 independent methionine synthase family. Zn(2+) serves as cofactor.

The enzyme catalyses 5-methyltetrahydropteroyltri-L-glutamate + L-homocysteine = tetrahydropteroyltri-L-glutamate + L-methionine. The protein operates within amino-acid biosynthesis; L-methionine biosynthesis via de novo pathway; L-methionine from L-homocysteine (MetE route): step 1/1. Catalyzes the transfer of a methyl group from 5-methyltetrahydrofolate to homocysteine resulting in methionine formation. The sequence is that of 5-methyltetrahydropteroyltriglutamate--homocysteine methyltransferase from Escherichia coli O139:H28 (strain E24377A / ETEC).